Reading from the N-terminus, the 134-residue chain is ATP synthase epsilon chain (134 aa).

It belongs to the ATPase epsilon chain family. As to quaternary structure, F-type ATPases have 2 components, CF(1) - the catalytic core - and CF(0) - the membrane proton channel. CF(1) has five subunits: alpha(3), beta(3), gamma(1), delta(1), epsilon(1). CF(0) has three main subunits: a, b and c.

The protein resides in the cell membrane. In terms of biological role, produces ATP from ADP in the presence of a proton gradient across the membrane. This chain is ATP synthase epsilon chain, found in Anoxybacillus flavithermus (strain DSM 21510 / WK1).